The chain runs to 433 residues: C2H2 type master regulator of conidiophore development brlA (433 aa).

2 disordered regions span residues 23–54 and 238–268; these read PSECPSMTSSFSPLDSPTPTPTSLYSQGSMAS and TFKSHTPSTPHRSVSMGTPSGSDTPVSRMSG. Positions 30–48 are enriched in low complexity; it reads TSSFSPLDSPTPTPTSLYS. Positions 238 to 264 are enriched in polar residues; it reads TFKSHTPSTPHRSVSMGTPSGSDTPVS. C2H2-type zinc fingers lie at residues 321 to 345 and 351 to 376; these read FKCKEPGCKGRFKRQEHLKRHMKSH and HVCWVPGCHRAFSRSDNLNAHYTKTH. The interval 391-423 is disordered; that stretch reads ETSQDFDPDFRGQLTPDGRPIYGSKLEDSMPDC.

It localises to the nucleus. Its function is as follows. BrlA, abaA and wetA are pivotal regulators of conidiophore development and conidium maturation. They act individually and together to regulate their own expression and that of numerous other sporulation-specific genes. Binds promoters of target genes at brlA response elements (BREs) containing the conserved sequence 5'-(C/A)(A/G)AGGG(G/A)-3'. This chain is C2H2 type master regulator of conidiophore development brlA, found in Penicillium camemberti (strain FM 013).